Reading from the N-terminus, the 417-residue chain is Exodeoxyribonuclease 7 large subunit (417 aa).

Belongs to the XseA family. In terms of assembly, heterooligomer composed of large and small subunits.

The protein localises to the cytoplasm. It carries out the reaction Exonucleolytic cleavage in either 5'- to 3'- or 3'- to 5'-direction to yield nucleoside 5'-phosphates.. Functionally, bidirectionally degrades single-stranded DNA into large acid-insoluble oligonucleotides, which are then degraded further into small acid-soluble oligonucleotides. The polypeptide is Exodeoxyribonuclease 7 large subunit (Helicobacter hepaticus (strain ATCC 51449 / 3B1)).